We begin with the raw amino-acid sequence, 362 residues long: Phosphoserine aminotransferase (362 aa).

L-glutamate is bound at residue R43. Residues 77–78, W103, T153, D173, and Q196 contribute to the pyridoxal 5'-phosphate site; that span reads AS. At K197 the chain carries N6-(pyridoxal phosphate)lysine. Residue 238 to 239 coordinates pyridoxal 5'-phosphate; that stretch reads NT.

The protein belongs to the class-V pyridoxal-phosphate-dependent aminotransferase family. SerC subfamily. In terms of assembly, homodimer. Requires pyridoxal 5'-phosphate as cofactor.

The protein localises to the cytoplasm. The catalysed reaction is O-phospho-L-serine + 2-oxoglutarate = 3-phosphooxypyruvate + L-glutamate. The enzyme catalyses 4-(phosphooxy)-L-threonine + 2-oxoglutarate = (R)-3-hydroxy-2-oxo-4-phosphooxybutanoate + L-glutamate. Its pathway is amino-acid biosynthesis; L-serine biosynthesis; L-serine from 3-phospho-D-glycerate: step 2/3. In terms of biological role, catalyzes the reversible conversion of 3-phosphohydroxypyruvate to phosphoserine and of 3-hydroxy-2-oxo-4-phosphonooxybutanoate to phosphohydroxythreonine. In Lysinibacillus sphaericus (strain C3-41), this protein is Phosphoserine aminotransferase.